We begin with the raw amino-acid sequence, 419 residues long: Erythromycin esterase type II (419 aa).

This enzyme confers resistance to erythromycin through inactivation by hydrolyzing the lactone ring of the antibiotic. The polypeptide is Erythromycin esterase type II (ereB) (Escherichia coli).